The following is a 407-amino-acid chain: Spore germination protein KC (407 aa).

The signal sequence occupies residues 1–20 (MVRKCLLAVLMLLSVIVLPG). Cys21 carries the N-palmitoyl cysteine lipid modification. A lipid anchor (S-diacylglycerol cysteine) is attached at Cys21.

The protein belongs to the GerABKC lipoprotein family.

Its subcellular location is the cell membrane. Its function is as follows. Involved in the germination response to the combination of glucose, fructose, L-asparagine, and KCl. The protein is Spore germination protein KC (gerKC) of Bacillus subtilis (strain 168).